The sequence spans 474 residues: Peroxisome proliferator-activated receptor alpha (474 aa).

The segment at residues 106–180 (NLECRVCSDK…VGMSHNAIRF (75 aa)) is a DNA-binding region (nuclear receptor). NR C4-type zinc fingers lie at residues 109 to 129 (CRVCSDKASGFHYGVHACEGC) and 146 to 168 (CERMCKIQKKNRNKCQYCRFEKC). The NR LBD domain occupies 245–472 (FVIHDMETLC…HPLLQEIYRD (228 aa)).

Belongs to the nuclear hormone receptor family. NR1 subfamily. As to quaternary structure, heterodimer with the retinoid X receptor. As to expression, ubiquitous.

The protein localises to the nucleus. Its function is as follows. Ligand-activated transcription factor. Key regulator of lipid metabolism. Activated by lipids. Receptor for peroxisome proliferators such as hypolipidemic drugs and fatty acids. Once activated by a ligand, the receptor binds to promoter elements of target genes. Regulates the peroxisomal beta-oxidation pathway of fatty acids. This chain is Peroxisome proliferator-activated receptor alpha (ppara), found in Xenopus laevis (African clawed frog).